The following is a 148-amino-acid chain: 3-hydroxyacyl-[acyl-carrier-protein] dehydratase FabZ (148 aa).

The active site involves H48.

Belongs to the thioester dehydratase family. FabZ subfamily.

The protein resides in the cytoplasm. The catalysed reaction is a (3R)-hydroxyacyl-[ACP] = a (2E)-enoyl-[ACP] + H2O. In terms of biological role, involved in unsaturated fatty acids biosynthesis. Catalyzes the dehydration of short chain beta-hydroxyacyl-ACPs and long chain saturated and unsaturated beta-hydroxyacyl-ACPs. The sequence is that of 3-hydroxyacyl-[acyl-carrier-protein] dehydratase FabZ from Campylobacter curvus (strain 525.92).